We begin with the raw amino-acid sequence, 146 residues long: Large ribosomal subunit protein uL15 (146 aa).

Over residues 1 to 13 the composition is skewed to basic and acidic residues; it reads MKLNELKPNEGSR. Residues 1–54 are disordered; that stretch reads MKLNELKPNEGSRRNRKRVGRGTSSGYGKTAGRGQKGQLARTGGKTRLGFEGGQ. Residues 23 to 35 are compositionally biased toward gly residues; sequence TSSGYGKTAGRGQ.

The protein belongs to the universal ribosomal protein uL15 family. Part of the 50S ribosomal subunit.

Binds to the 23S rRNA. The polypeptide is Large ribosomal subunit protein uL15 (Lactobacillus gasseri (strain ATCC 33323 / DSM 20243 / BCRC 14619 / CIP 102991 / JCM 1131 / KCTC 3163 / NCIMB 11718 / NCTC 13722 / AM63)).